The chain runs to 254 residues: Protein Thf1 (254 aa).

Residues 182–241 are a coiled coil; it reads EEKMKKDLDLYRSNLEKMNQVLEVLEDALAVERQRREKAEAEAKAKTAEATVATETNDEQ. Residues 215–228 are compositionally biased toward basic and acidic residues; it reads QRREKAEAEAKAKT. Positions 215-254 are disordered; sequence QRREKAEAEAKAKTAEATVATETNDEQDEQKETSESGSDA.

It belongs to the THF1 family.

Functionally, may be involved in photosynthetic membrane biogenesis. In Picosynechococcus sp. (strain ATCC 27264 / PCC 7002 / PR-6) (Agmenellum quadruplicatum), this protein is Protein Thf1.